Consider the following 329-residue polypeptide: GTP 3',8-cyclase (329 aa).

The Radical SAM core domain maps to 8 to 234 (AFARKFYYLR…QLRQRSDGPA (227 aa)). Arginine 17 is a binding site for GTP. Cysteine 24 and cysteine 28 together coordinate [4Fe-4S] cluster. Residue tyrosine 30 participates in S-adenosyl-L-methionine binding. Cysteine 31 provides a ligand contact to [4Fe-4S] cluster. Arginine 68 contributes to the GTP binding site. Glycine 72 serves as a coordination point for S-adenosyl-L-methionine. Residue threonine 99 coordinates GTP. Serine 123 contacts S-adenosyl-L-methionine. Lysine 160 provides a ligand contact to GTP. Methionine 194 contacts S-adenosyl-L-methionine. [4Fe-4S] cluster contacts are provided by cysteine 257 and cysteine 260. A GTP-binding site is contributed by 262-264 (RLR). Cysteine 274 is a [4Fe-4S] cluster binding site.

It belongs to the radical SAM superfamily. MoaA family. In terms of assembly, monomer and homodimer. The cofactor is [4Fe-4S] cluster.

It carries out the reaction GTP + AH2 + S-adenosyl-L-methionine = (8S)-3',8-cyclo-7,8-dihydroguanosine 5'-triphosphate + 5'-deoxyadenosine + L-methionine + A + H(+). The protein operates within cofactor biosynthesis; molybdopterin biosynthesis. Functionally, catalyzes the cyclization of GTP to (8S)-3',8-cyclo-7,8-dihydroguanosine 5'-triphosphate. In Shigella boydii serotype 18 (strain CDC 3083-94 / BS512), this protein is GTP 3',8-cyclase.